The following is a 180-amino-acid chain: MNDVTYYLISLASQSPAGSFGLNTNNLVTTLINIGVVLCLLIIFGKGFLRNFLDTRKNKIVNTMQISDELYSSAVEKLEKAQARLCKVENEAKQLRVTGYSEIEHEKLNLINSTYKTLERLEKKKKETCSFEQQQAFNDVRQWVLQQTLQRVLKTLNGSFNPELHLRTIRINISMLGTLK.

The chain crosses the membrane as a helical span at residues 28–48 (VTTLINIGVVLCLLIIFGKGF).

It belongs to the ATPase B chain family. As to quaternary structure, F-type ATPases have 2 components, F(1) - the catalytic core - and F(0) - the membrane proton channel. F(1) has five subunits: alpha(3), beta(3), gamma(1), delta(1), epsilon(1). F(0) has four main subunits: a(1), b(1), b'(1) and c(10-14). The alpha and beta chains form an alternating ring which encloses part of the gamma chain. F(1) is attached to F(0) by a central stalk formed by the gamma and epsilon chains, while a peripheral stalk is formed by the delta, b and b' chains.

It localises to the plastid. Its subcellular location is the chloroplast thylakoid membrane. Functionally, f(1)F(0) ATP synthase produces ATP from ADP in the presence of a proton or sodium gradient. F-type ATPases consist of two structural domains, F(1) containing the extramembraneous catalytic core and F(0) containing the membrane proton channel, linked together by a central stalk and a peripheral stalk. During catalysis, ATP synthesis in the catalytic domain of F(1) is coupled via a rotary mechanism of the central stalk subunits to proton translocation. Its function is as follows. Component of the F(0) channel, it forms part of the peripheral stalk, linking F(1) to F(0). In Cuscuta obtusiflora (Peruvian dodder), this protein is ATP synthase subunit b, chloroplastic.